Reading from the N-terminus, the 238-residue chain is tRNA (guanine-N(7)-)-methyltransferase (238 aa).

Glu68, Glu93, Asp120, and Asp143 together coordinate S-adenosyl-L-methionine. Asp143 is an active-site residue. Substrate is bound by residues Lys147, Asp179, and 216–219; that span reads TKFE.

This sequence belongs to the class I-like SAM-binding methyltransferase superfamily. TrmB family.

It catalyses the reaction guanosine(46) in tRNA + S-adenosyl-L-methionine = N(7)-methylguanosine(46) in tRNA + S-adenosyl-L-homocysteine. Its pathway is tRNA modification; N(7)-methylguanine-tRNA biosynthesis. Functionally, catalyzes the formation of N(7)-methylguanine at position 46 (m7G46) in tRNA. In Shewanella oneidensis (strain ATCC 700550 / JCM 31522 / CIP 106686 / LMG 19005 / NCIMB 14063 / MR-1), this protein is tRNA (guanine-N(7)-)-methyltransferase.